The primary structure comprises 671 residues: Probable serine/threonine-protein kinase DDB_G0286627 (671 aa).

Residues 31-283 enclose the Protein kinase domain; the sequence is WVIERQLSKG…SHQLIKHPFF (253 aa). ATP-binding positions include 37–45 and lysine 61; that span reads LSKGSFGQV. Aspartate 148 acts as the Proton acceptor in catalysis. Residues 369–389 traverse the membrane as a helical segment; sequence FKIIYLFLILLFLMTILVNLN. The tract at residues 410–523 is disordered; sequence PESNPIKKPS…PPVTETPKPT (114 aa). The segment covering 427 to 490 has biased composition (low complexity); sequence NQYSEGSQSS…PTDSSTTDPP (64 aa). Positions 491-513 are enriched in pro residues; that stretch reads VTDPPITDPPITDPPVTDPPITE.

This sequence belongs to the protein kinase superfamily. STE Ser/Thr protein kinase family. Requires Mg(2+) as cofactor.

It is found in the membrane. It carries out the reaction L-seryl-[protein] + ATP = O-phospho-L-seryl-[protein] + ADP + H(+). The catalysed reaction is L-threonyl-[protein] + ATP = O-phospho-L-threonyl-[protein] + ADP + H(+). The polypeptide is Probable serine/threonine-protein kinase DDB_G0286627 (Dictyostelium discoideum (Social amoeba)).